The sequence spans 393 residues: Stearoyl-[acyl-carrier-protein] 9-desaturase, chloroplastic (393 aa).

The N-terminal 30 residues, Met1–Met30, are a transit peptide targeting the chloroplast. The Fe cation site is built by Glu135, Glu173, His176, Glu259, and His262.

It belongs to the fatty acid desaturase type 2 family. In terms of assembly, homodimer. Fe(2+) is required as a cofactor.

It is found in the plastid. The protein localises to the chloroplast. The enzyme catalyses octadecanoyl-[ACP] + 2 reduced [2Fe-2S]-[ferredoxin] + O2 + 2 H(+) = (9Z)-octadecenoyl-[ACP] + 2 oxidized [2Fe-2S]-[ferredoxin] + 2 H2O. It participates in lipid metabolism; fatty acid metabolism. Its function is as follows. Converts stearoyl-ACP to oleoyl-ACP by introduction of a cis double bond between carbons 9 and 10 of the acyl chain. This Solanum tuberosum (Potato) protein is Stearoyl-[acyl-carrier-protein] 9-desaturase, chloroplastic.